A 503-amino-acid polypeptide reads, in one-letter code: Aromatase (503 aa).

2 helical membrane passes run 19–39 and 303–323; these read EAMP…LLVW and MLIA…FLIA. The substrate site is built by Asp-309 and Met-374. Position 437 (Cys-437) interacts with heme.

Belongs to the cytochrome P450 family. The cofactor is heme. In terms of processing, phosphorylated in vitro by PKA and PKG/PRKG1. These phosphorylations inhibit the catalytic activity as measured by estrone synthesis from androstenedione (36% decrease for PKA and 30% for PKG/PRKG1). Widely expressed, including in adult and fetal brain, placenta, skin fibroblasts, adipose tissue and gonads.

Its subcellular location is the endoplasmic reticulum membrane. It localises to the microsome membrane. The enzyme catalyses testosterone + 3 reduced [NADPH--hemoprotein reductase] + 3 O2 = 17beta-estradiol + formate + 3 oxidized [NADPH--hemoprotein reductase] + 4 H2O + 4 H(+). The catalysed reaction is androst-4-ene-3,17-dione + 3 reduced [NADPH--hemoprotein reductase] + 3 O2 = estrone + formate + 3 oxidized [NADPH--hemoprotein reductase] + 4 H2O + 4 H(+). It catalyses the reaction androst-4-ene-3,17-dione + reduced [NADPH--hemoprotein reductase] + O2 = 19-hydroxyandrost-4-ene-3,17-dione + oxidized [NADPH--hemoprotein reductase] + H2O + H(+). It carries out the reaction 19-hydroxyandrost-4-ene-3,17-dione + reduced [NADPH--hemoprotein reductase] + O2 = 19-oxo-androst-4-ene-3,17-dione + oxidized [NADPH--hemoprotein reductase] + 2 H2O + H(+). The enzyme catalyses 19-oxo-androst-4-ene-3,17-dione + reduced [NADPH--hemoprotein reductase] + O2 = estrone + formate + oxidized [NADPH--hemoprotein reductase] + H2O + 2 H(+). The catalysed reaction is estrone + reduced [NADPH--hemoprotein reductase] + O2 = 2-hydroxyestrone + oxidized [NADPH--hemoprotein reductase] + H2O + H(+). It catalyses the reaction 17beta-hydroxy-5alpha-androstan-3-one + reduced [NADPH--hemoprotein reductase] + O2 = 17beta,19-dihydroxy-3-oxo-5alpha-androstanone + oxidized [NADPH--hemoprotein reductase] + H2O + H(+). It carries out the reaction 17beta,19-dihydroxy-3-oxo-5alpha-androstanone + reduced [NADPH--hemoprotein reductase] + O2 = 17beta-hydroxy-3,19-dioxo-5alpha-androstanone + oxidized [NADPH--hemoprotein reductase] + 2 H2O + H(+). The enzyme catalyses 17beta-hydroxy-3,19-dioxo-5alpha-androstanone + reduced [NADPH--hemoprotein reductase] + O2 = 17beta-hydroxy-3-oxo-19-nor-5alpha-androst-1-ene + formate + oxidized [NADPH--hemoprotein reductase] + H2O + 2 H(+). Its pathway is steroid hormone biosynthesis. In terms of biological role, a cytochrome P450 monooxygenase that catalyzes the conversion of C19 androgens, androst-4-ene-3,17-dione (androstenedione) and testosterone to the C18 estrogens, estrone and estradiol, respectively. Catalyzes three successive oxidations of C19 androgens: two conventional oxidations at C19 yielding 19-hydroxy and 19-oxo/19-aldehyde derivatives, followed by a third oxidative aromatization step that involves C1-beta hydrogen abstraction combined with cleavage of the C10-C19 bond to yield a phenolic A ring and formic acid. Alternatively, the third oxidative reaction yields a 19-norsteroid and formic acid. Converts dihydrotestosterone to delta1,10-dehydro 19-nordihydrotestosterone and may play a role in homeostasis of this potent androgen. Also displays 2-hydroxylase activity toward estrone. Mechanistically, uses molecular oxygen inserting one oxygen atom into a substrate, and reducing the second into a water molecule, with two electrons provided by NADPH via cytochrome P450 reductase (CPR; NADPH-ferrihemoprotein reductase). This Homo sapiens (Human) protein is Aromatase.